Consider the following 593-residue polypeptide: High affinity cGMP-specific 3',5'-cyclic phosphodiesterase 9A (593 aa).

Residues 87–141 (SAGVEDKRTTSRGQSAERPLRDRRVVGLEQPRREGAFESGQVEPRPREPQGCYQE) form a disordered region. Basic and acidic residues predominate over residues 104–122 (RPLRDRRVVGLEQPRREGA). Residues 236 to 557 (PRRDVPTYPK…DRYEELKRID (322 aa)) enclose the PDEase domain. Catalysis depends on H312, which acts as the Proton donor. 3',5'-cyclic GMP is bound at residue 312–316 (HNFRH). Residues H316, H352, and D353 each contribute to the Zn(2+) site. D353 is a 3',5'-cyclic GMP binding site. D353 is a Mg(2+) binding site. Position 379 is a phosphoserine (S379). Residues D462, Y484, and 512–513 (AQ) contribute to the 3',5'-cyclic GMP site. D462 provides a ligand contact to Zn(2+). Residues 564–593 (QKKTDSLTSGATEKSRERSRDVKNSEGDCA) form a disordered region. The segment covering 576-593 (EKSRERSRDVKNSEGDCA) has biased composition (basic and acidic residues).

Belongs to the cyclic nucleotide phosphodiesterase family. PDE9 subfamily. As to quaternary structure, homodimer. Zn(2+) serves as cofactor. The cofactor is Mg(2+). Expressed in all tissues examined (testis, brain, small intestine, skeletal muscle, heart, lung, thymus, spleen, placenta, kidney, liver, pancreas, ovary and prostate) except blood. Highest levels in brain, heart, kidney, spleen, prostate and colon. Isoform PDE9A12 is found in prostate. In brain, present in the cortex, cerebellum, and subiculum (at protein level). In heart, primarily localizes to myocytes.

It localises to the cell projection. The protein resides in the ruffle membrane. Its subcellular location is the cytoplasm. It is found in the perinuclear region. The protein localises to the golgi apparatus. It localises to the endoplasmic reticulum. The protein resides in the cell membrane. Its subcellular location is the sarcolemma. It catalyses the reaction 3',5'-cyclic GMP + H2O = GMP + H(+). It functions in the pathway purine metabolism; 3',5'-cyclic GMP degradation; GMP from 3',5'-cyclic GMP: step 1/1. With respect to regulation, inhibited by zaprinast; inhibitor is however not specific to PDE9A. Specifically inhibited by BAY-73-6691 (1-(2-chlorophenyl)-6-((2R)-3,3,3- trifluoro-2-methylpropyl)-1,5-dihydro-4H-pyrazolo(3,4-d)pyrimidine-4-one). BAY-73-9961 has two enantiomers, (R) and (S), due to the presence of a chiral center, and both forms vary in their pattern of interaction. Specifically inhibited by PF-4181366 (4H-Pyrazolo[3,4-d]pyrimidin-4-one, 1- cyclopentyl-1,5-dihydro-6-[(3S,4S)-4-methyl- 1-(6-quinoxalinylmethyl)-3-pyrrolidinyl]-one). Specifically inhibited by PF-4449613 ((R)-6-(1-(3-phenoxyazetidin-1-yl)ethyl)-1-(tetrahydro-2H-pyran-4-yl)-1H-pyrazolo[3,4-d]pyrimidin- 4(5H)-one). Specifically inhibited by inhibitor 28 (2-((1-(2-Chlorophenyl)-4-hydroxy-1Hpyrazolo[ 3,4-d]pyrimidin-6-yl)amino)-N-(4- methoxyphenyl)propanamide): inhibitor forms a hydrogen bond with Tyr-484 and Gln-513. Specifically inhibited by 1-Cyclopentyl-6-[(1r)-1-(3-phenoxyazetidin- 1-Yl)ethyl]-1,5-dihydro-4h-pyrazolo[3,4-D] pyrimidin-4-one: inhibitor forms a hydrogen bond with Tyr-484 and Gln-513. Specifically hydrolyzes the second messenger cGMP, which is a key regulator of many important physiological processes. Highly specific: compared to other members of the cyclic nucleotide phosphodiesterase family, has the highest affinity and selectivity for cGMP. Specifically regulates natriuretic-peptide-dependent cGMP signaling in heart, acting as a regulator of cardiac hypertrophy in myocytes and muscle. Does not regulate nitric oxide-dependent cGMP in heart. Additional experiments are required to confirm whether its ability to hydrolyze natriuretic-peptide-dependent cGMP is specific to heart or is a general feature of the protein. In brain, involved in cognitive function, such as learning and long-term memory. This chain is High affinity cGMP-specific 3',5'-cyclic phosphodiesterase 9A, found in Homo sapiens (Human).